A 791-amino-acid polypeptide reads, in one-letter code: Calcium-transporting ATPase CtpE (791 aa).

Transmembrane regions (helical) follow at residues 53 to 73, 213 to 233, and 252 to 272; these read LFVIVLSTGSVINGAFGLLII, ILQFITYLLVPAGLLTIYTQL, and VPMVPEGLVLMTSIAFAVGVV. The active-site 4-aspartylphosphate intermediate is the aspartate 299. 3 residues coordinate Mg(2+): aspartate 299, threonine 301, and aspartate 530. 6 helical membrane passes run 596 to 616, 627 to 647, 664 to 684, 697 to 717, 725 to 745, and 757 to 777; these read VYSVLLAILVGIGGLSAKIFG, IHVTIAAWFTIGIPAFILSLA, AALPSGLVVGTATFVSYLVAY, ASTAALITLLASSLWVLAVVA, VLLVACSMLAYVLIFSIPLAQ, and VTSVALGIGLAGAALIEVLWW.

This sequence belongs to the cation transport ATPase (P-type) (TC 3.A.3) family.

The protein resides in the cell membrane. The enzyme catalyses Ca(2+)(in) + ATP + H2O = Ca(2+)(out) + ADP + phosphate + H(+). Its function is as follows. P-type ATPase involved in specific uptake of calcium. Essential for growth and maintenance of cell surface integrity under Ca(2+)-deficient conditions. This chain is Calcium-transporting ATPase CtpE, found in Mycolicibacterium smegmatis (strain ATCC 700084 / mc(2)155) (Mycobacterium smegmatis).